The sequence spans 297 residues: Succinate dehydrogenase [ubiquinone] iron-sulfur subunit, mitochondrial (297 aa).

The segment at 33 to 55 (TAEALSASRPPIKETKTSTVKEP) is disordered. Positions 78–157 (DKPRMQSYTL…ETRIYPLPHT (80 aa)) constitute a 2Fe-2S ferredoxin-type domain. [2Fe-2S] cluster-binding residues include cysteine 117, cysteine 122, cysteine 125, and cysteine 137. The 4Fe-4S ferredoxin-type domain maps to 199-229 (DRKKLDGLYECILCACCSTSCPSYWWNSEEY). The [4Fe-4S] cluster site is built by cysteine 209, cysteine 212, and cysteine 215. Cysteine 219 contributes to the [3Fe-4S] cluster binding site. Residue tryptophan 224 coordinates a ubiquinone. 2 residues coordinate [3Fe-4S] cluster: cysteine 266 and cysteine 272. [4Fe-4S] cluster is bound at residue cysteine 276.

It belongs to the succinate dehydrogenase/fumarate reductase iron-sulfur protein family. As to quaternary structure, component of complex II composed of four subunits: a flavoprotein (FP), an iron-sulfur protein (IP), and a cytochrome b composed of a large and a small subunit. It depends on [2Fe-2S] cluster as a cofactor. [3Fe-4S] cluster is required as a cofactor. [4Fe-4S] cluster serves as cofactor.

It localises to the mitochondrion inner membrane. The catalysed reaction is a quinone + succinate = fumarate + a quinol. It participates in carbohydrate metabolism; tricarboxylic acid cycle; fumarate from succinate (eukaryal route): step 1/1. Its function is as follows. Iron-sulfur protein (IP) subunit of succinate dehydrogenase (SDH) that is involved in complex II of the mitochondrial electron transport chain and is responsible for transferring electrons from succinate to ubiquinone (coenzyme Q). This Zymoseptoria tritici (Speckled leaf blotch fungus) protein is Succinate dehydrogenase [ubiquinone] iron-sulfur subunit, mitochondrial (SDH2).